We begin with the raw amino-acid sequence, 207 residues long: LexA repressor (207 aa).

Residues 29 to 49 constitute a DNA-binding region (H-T-H motif); sequence VREICSAVDLSSTSTVHGHLA. Catalysis depends on for autocatalytic cleavage activity residues Ser-128 and Lys-166.

Belongs to the peptidase S24 family. As to quaternary structure, homodimer.

The catalysed reaction is Hydrolysis of Ala-|-Gly bond in repressor LexA.. Its function is as follows. Represses a number of genes involved in the response to DNA damage (SOS response), including recA and lexA. In the presence of single-stranded DNA, RecA interacts with LexA causing an autocatalytic cleavage which disrupts the DNA-binding part of LexA, leading to derepression of the SOS regulon and eventually DNA repair. The protein is LexA repressor of Lactobacillus gasseri (strain ATCC 33323 / DSM 20243 / BCRC 14619 / CIP 102991 / JCM 1131 / KCTC 3163 / NCIMB 11718 / NCTC 13722 / AM63).